Reading from the N-terminus, the 244-residue chain is Rho-related GTP-binding protein RhoE (244 aa).

Residue 30–37 (GDSQCGRT) participates in GTP binding. An Effector region motif is present at residues 52–60 (YVPTVFENY). Residues 77–81 (DTSGS) and 135–138 (CKSD) each bind GTP. Residue Cys-241 is modified to Cysteine methyl ester. Cys-241 carries the S-farnesyl cysteine lipid modification. A propeptide spans 242–244 (TVM) (removed in mature form).

It belongs to the small GTPase superfamily. Rho family. In terms of assembly, binds ROCK1. Interacts with UBXD5.

It localises to the cell membrane. In terms of biological role, binds GTP but lacks intrinsic GTPase activity and is resistant to Rho-specific GTPase-activating proteins. This is Rho-related GTP-binding protein RhoE (RND3) from Sus scrofa (Pig).